Consider the following 142-residue polypeptide: Lutropin subunit beta (142 aa).

Residues methionine 1 to threonine 21 form the signal peptide. 6 disulfides stabilise this stretch: cysteine 30–cysteine 78, cysteine 44–cysteine 93, cysteine 47–cysteine 131, cysteine 55–cysteine 109, cysteine 59–cysteine 111, and cysteine 114–cysteine 121. A glycan (N-linked (GlcNAc...) asparagine) is linked at asparagine 34.

The protein belongs to the glycoprotein hormones subunit beta family. In terms of assembly, heterodimer of a common alpha chain and a unique beta chain which confers biological specificity to thyrotropin, lutropin, follitropin and gonadotropin.

Its subcellular location is the secreted. In terms of biological role, promotes spermatogenesis and ovulation by stimulating the testes and ovaries to synthesize steroids. This chain is Lutropin subunit beta (LHB), found in Panthera tigris altaica (Siberian tiger).